Here is a 249-residue protein sequence, read N- to C-terminus: Protein twisted gastrulation (249 aa).

The N-terminal stretch at 1–23 (MQLLCYFVILFVGIAPWSSLAND) is a signal peptide. N199 is a glycosylation site (N-linked (GlcNAc...) asparagine).

The protein belongs to the twisted gastrulation protein family. As to quaternary structure, component of a complex composed of dpp, sog and tsg. In terms of tissue distribution, first appears in stage 4 embryos, expressed in two domains: a broad mid-dorsal saddle and an anterior cap, expression between the domains is continuous across the dorsal midline. At stage 5, expression is refined into 4 graded stripes in the mid-dorsal region and a paired domain in the anterior region. During stages 7 and 8, anterior expression fades and the mid dorsal stripes are located between the anterior and posterior transverse furrow (ATF and PTF). Expressing cells become incorporated into the deepening PTF.

Its subcellular location is the secreted. In terms of biological role, involved in dorsal-ventral patterning. Required for specification of a narrow strip of dorsal midline cells that will give rise to the amnioserosa, but not for specification of dorsal ectoderm cells. Inhibits BMP signaling; enhances the binding of sog to dpp, thus enhancing the antagonistic activity of sog. The chain is Protein twisted gastrulation (tsg) from Drosophila melanogaster (Fruit fly).